The sequence spans 144 residues: AP-4 complex subunit sigma-1 (144 aa).

Belongs to the adaptor complexes small subunit family. Adaptor protein complex 4 (AP-4) is a heterotetramer composed of two large adaptins (epsilon-type subunit AP4E1 and beta-type subunit AP4B1), a medium adaptin (mu-type subunit AP4M1) and a small adaptin (sigma-type AP4S1).

It localises to the golgi apparatus. The protein localises to the trans-Golgi network membrane. Component of the adaptor protein complex 4 (AP-4). Adaptor protein complexes are vesicle coat components involved both in vesicle formation and cargo selection. They control the vesicular transport of proteins in different trafficking pathways. AP-4 forms a non clathrin-associated coat on vesicles departing the trans-Golgi network (TGN) and may be involved in the targeting of proteins from the trans-Golgi network (TGN) to the endosomal-lysosomal system. It is also involved in protein sorting to the basolateral membrane in epithelial cells and the proper asymmetric localization of somatodendritic proteins in neurons. AP-4 is involved in the recognition and binding of tyrosine-based sorting signals found in the cytoplasmic part of cargos, but may also recognize other types of sorting signal. The polypeptide is AP-4 complex subunit sigma-1 (Mus musculus (Mouse)).